The chain runs to 384 residues: Shufflon-specific DNA recombinase (384 aa).

A Core-binding (CB) domain is found at 9-96 (MSLSRALDKY…LLSSLFNIAR (88 aa)). Residues 118-284 (GRDRRLTSSE…RAWQLVSKLD (167 aa)) form the Tyr recombinase domain. Residues Arg155, Lys180, His235, Arg238, and His262 contribute to the active site. Residue Tyr271 is the O-(3'-phospho-DNA)-tyrosine intermediate of the active site.

The protein belongs to the 'phage' integrase family.

Its function is as follows. Shufflon-specific DNA recombinase. This is Shufflon-specific DNA recombinase (rci) from Escherichia coli.